Here is a 470-residue protein sequence, read N- to C-terminus: Outer capsid protein sigma-1 (470 aa).

Residues 1-324 (MDASLITEIR…LELDTANNRV (324 aa)) are tail. An N-linked (GlcNAc...) asparagine; by host glycan is attached at Asn-21. A coiled-coil region spans residues 26 to 46 (KEIEEIKKQVQVNVDDIRAAN). Asn-121, Asn-205, and Asn-353 each carry an N-linked (GlcNAc...) asparagine; by host glycan. The tract at residues 325 to 470 (QVADRFGMRT…WTIMYPCNVR (146 aa)) is head.

Belongs to the orthoreovirus sigma-1 protein family. In terms of assembly, homotrimer. Interacts (via the head region) with human F11R. Post-translationally, undergoes dramatic conformational rearrangements during viral disassembly in the endocytic pathway.

It is found in the virion. Functionally, fiber-like molecule that attaches the virion to the host cell membrane by binding to the primary receptor F11R/JAM-A and to sialic acid containing proteins (coreceptor). The interaction of sigma-1 with F11R is required for NF-kB activation and apoptosis. Binding to both sialic acid and F11R is required to induce maximal levels of apoptosis. The polypeptide is Outer capsid protein sigma-1 (S1) (Reovirus type 1 (strain Lang) (T1L)).